Reading from the N-terminus, the 399-residue chain is Carbamoyl phosphate synthase small chain (399 aa).

The interval 1–209 is CPSase; sequence MEKFKLLKLG…SAINKKLHTS (209 aa). 3 residues coordinate L-glutamine: Ser-55, Gly-261, and Gly-263. A Glutamine amidotransferase type-1 domain is found at 213–399; that stretch reads RIIVLDLGVK…VYIIYKSKSS (187 aa). The active-site Nucleophile is the Cys-289. The L-glutamine site is built by Leu-290, Gln-293, Asn-329, Gly-331, and Phe-332. Residues His-372 and Glu-374 contribute to the active site.

The protein belongs to the CarA family. As to quaternary structure, composed of two chains; the small (or glutamine) chain promotes the hydrolysis of glutamine to ammonia, which is used by the large (or ammonia) chain to synthesize carbamoyl phosphate. Tetramer of heterodimers (alpha,beta)4.

Its subcellular location is the plastid. It is found in the chloroplast. The enzyme catalyses hydrogencarbonate + L-glutamine + 2 ATP + H2O = carbamoyl phosphate + L-glutamate + 2 ADP + phosphate + 2 H(+). The catalysed reaction is L-glutamine + H2O = L-glutamate + NH4(+). It participates in amino-acid biosynthesis; L-arginine biosynthesis; carbamoyl phosphate from bicarbonate: step 1/1. The protein operates within pyrimidine metabolism; UMP biosynthesis via de novo pathway; (S)-dihydroorotate from bicarbonate: step 1/3. Functionally, small subunit of the glutamine-dependent carbamoyl phosphate synthetase (CPSase). CPSase catalyzes the formation of carbamoyl phosphate from the ammonia moiety of glutamine, carbonate, and phosphate donated by ATP, constituting the first step of 2 biosynthetic pathways, one leading to arginine and/or urea and the other to pyrimidine nucleotides. The small subunit (glutamine amidotransferase) binds and cleaves glutamine to supply the large subunit with the substrate ammonia. The protein is Carbamoyl phosphate synthase small chain of Cyanidium caldarium (Red alga).